Consider the following 507-residue polypeptide: ATP synthase subunit alpha, chloroplastic (507 aa).

ATP is bound at residue Gly-170–Thr-177.

It belongs to the ATPase alpha/beta chains family. In terms of assembly, F-type ATPases have 2 components, CF(1) - the catalytic core - and CF(0) - the membrane proton channel. CF(1) has five subunits: alpha(3), beta(3), gamma(1), delta(1), epsilon(1). CF(0) has four main subunits: a, b, b' and c.

The protein localises to the plastid. Its subcellular location is the chloroplast thylakoid membrane. It carries out the reaction ATP + H2O + 4 H(+)(in) = ADP + phosphate + 5 H(+)(out). In terms of biological role, produces ATP from ADP in the presence of a proton gradient across the membrane. The alpha chain is a regulatory subunit. This is ATP synthase subunit alpha, chloroplastic from Physcomitrium patens (Spreading-leaved earth moss).